A 363-amino-acid chain; its full sequence is Carbamoyl phosphate synthase small chain (363 aa).

CPSase stretches follow at residues 1–168 and 1–172; these read MTKR…ASPG and MTKR…DGKR. Ser-46, Gly-220, and Gly-222 together coordinate L-glutamine. The Glutamine amidotransferase type-1 domain occupies 172-359; the sequence is RVVLVDYGVK…MEMMNVKEEG (188 aa). The active-site Nucleophile is the Cys-247. L-glutamine contacts are provided by Leu-248, Gln-251, Asn-289, Gly-291, and Tyr-292. Catalysis depends on residues His-332 and Glu-334.

The protein belongs to the CarA family. In terms of assembly, composed of two chains; the small (or glutamine) chain promotes the hydrolysis of glutamine to ammonia, which is used by the large (or ammonia) chain to synthesize carbamoyl phosphate. Tetramer of heterodimers (alpha,beta)4.

The enzyme catalyses hydrogencarbonate + L-glutamine + 2 ATP + H2O = carbamoyl phosphate + L-glutamate + 2 ADP + phosphate + 2 H(+). The catalysed reaction is L-glutamine + H2O = L-glutamate + NH4(+). It functions in the pathway amino-acid biosynthesis; L-arginine biosynthesis; carbamoyl phosphate from bicarbonate: step 1/1. The protein operates within pyrimidine metabolism; UMP biosynthesis via de novo pathway; (S)-dihydroorotate from bicarbonate: step 1/3. Small subunit of the glutamine-dependent carbamoyl phosphate synthetase (CPSase). CPSase catalyzes the formation of carbamoyl phosphate from the ammonia moiety of glutamine, carbonate, and phosphate donated by ATP, constituting the first step of 2 biosynthetic pathways, one leading to arginine and/or urea and the other to pyrimidine nucleotides. The small subunit (glutamine amidotransferase) binds and cleaves glutamine to supply the large subunit with the substrate ammonia. The chain is Carbamoyl phosphate synthase small chain from Listeria innocua serovar 6a (strain ATCC BAA-680 / CLIP 11262).